Here is a 441-residue protein sequence, read N- to C-terminus: ATP-dependent protease ATPase subunit HslU (441 aa).

ATP-binding positions include Ile18, 60–65 (GVGKTE), Asp254, Glu319, and Arg391.

Belongs to the ClpX chaperone family. HslU subfamily. A double ring-shaped homohexamer of HslV is capped on each side by a ring-shaped HslU homohexamer. The assembly of the HslU/HslV complex is dependent on binding of ATP.

The protein localises to the cytoplasm. Functionally, ATPase subunit of a proteasome-like degradation complex; this subunit has chaperone activity. The binding of ATP and its subsequent hydrolysis by HslU are essential for unfolding of protein substrates subsequently hydrolyzed by HslV. HslU recognizes the N-terminal part of its protein substrates and unfolds these before they are guided to HslV for hydrolysis. The polypeptide is ATP-dependent protease ATPase subunit HslU (Shewanella frigidimarina (strain NCIMB 400)).